Consider the following 230-residue polypeptide: Ribose-5-phosphate isomerase A (230 aa).

Residues 29–32, 86–89, and 99–102 contribute to the substrate site; these read SGST, DGAD, and KGGG. The active-site Proton acceptor is the glutamate 108. Lysine 126 lines the substrate pocket.

The protein belongs to the ribose 5-phosphate isomerase family. In terms of assembly, homodimer.

It catalyses the reaction aldehydo-D-ribose 5-phosphate = D-ribulose 5-phosphate. The protein operates within carbohydrate degradation; pentose phosphate pathway; D-ribose 5-phosphate from D-ribulose 5-phosphate (non-oxidative stage): step 1/1. Functionally, catalyzes the reversible conversion of ribose-5-phosphate to ribulose 5-phosphate. This Desulfatibacillum aliphaticivorans protein is Ribose-5-phosphate isomerase A.